The chain runs to 457 residues: Histidine--tRNA ligase (457 aa).

Belongs to the class-II aminoacyl-tRNA synthetase family. As to quaternary structure, homodimer.

Its subcellular location is the cytoplasm. It carries out the reaction tRNA(His) + L-histidine + ATP = L-histidyl-tRNA(His) + AMP + diphosphate + H(+). In Mesoplasma florum (strain ATCC 33453 / NBRC 100688 / NCTC 11704 / L1) (Acholeplasma florum), this protein is Histidine--tRNA ligase.